The following is a 433-amino-acid chain: 23S rRNA (uracil(1939)-C(5))-methyltransferase RlmD (433 aa).

The region spanning 10-68 (RTTTRQIITVSVNDLDSFGQGVARHNGKTLFIPGLLPQENAEVAVTEDKKQYARAKVVR) is the TRAM domain. [4Fe-4S] cluster contacts are provided by Cys81, Cys87, Cys90, and Cys162. S-adenosyl-L-methionine is bound by residues Gln265, Phe294, Asn299, Glu315, Asn342, and Asp363. Catalysis depends on Cys389, which acts as the Nucleophile.

It belongs to the class I-like SAM-binding methyltransferase superfamily. RNA M5U methyltransferase family. RlmD subfamily.

The enzyme catalyses uridine(1939) in 23S rRNA + S-adenosyl-L-methionine = 5-methyluridine(1939) in 23S rRNA + S-adenosyl-L-homocysteine + H(+). Functionally, catalyzes the formation of 5-methyl-uridine at position 1939 (m5U1939) in 23S rRNA. The protein is 23S rRNA (uracil(1939)-C(5))-methyltransferase RlmD of Shigella flexneri serotype 5b (strain 8401).